A 2224-amino-acid polypeptide reads, in one-letter code: Protein sidekick (2224 aa).

The N-terminal stretch at 1–47 is a signal peptide; that stretch reads MLKSAASSLRRRRPKTTITATLAIEMPSQPKLASLLAVLVLLCYCDS. The Extracellular portion of the chain corresponds to 48-2001; the sequence is CFFCYADANL…LQHKPFYRQT (1954 aa). In terms of domain architecture, Ig-like C2-type 1 spans 72–155; sequence PRFTTHPSSS…SIFSEKSDVV (84 aa). Residues cysteine 95 and cysteine 138 are joined by a disulfide bond. N-linked (GlcNAc...) asparagine glycosylation is found at asparagine 164, asparagine 250, asparagine 318, and asparagine 327. 4 consecutive Ig-like C2-type domains span residues 261 to 355, 359 to 445, 455 to 541, and 546 to 636; these read PEII…ARLQ, PPLF…NSAS, PIME…AYLS, and TQII…ARLS. 2 disulfide bridges follow: cysteine 283–cysteine 336 and cysteine 382–cysteine 433. N-linked (GlcNAc...) asparagine glycans are attached at residues asparagine 463, asparagine 485, and asparagine 491. Intrachain disulfides connect cysteine 476-cysteine 525 and cysteine 567-cysteine 620. Residues asparagine 628, asparagine 661, asparagine 707, asparagine 809, asparagine 870, asparagine 942, asparagine 1019, asparagine 1094, asparagine 1109, asparagine 1172, asparagine 1203, asparagine 1282, asparagine 1329, asparagine 1379, asparagine 1414, and asparagine 1420 are each glycosylated (N-linked (GlcNAc...) asparagine). 13 consecutive Fibronectin type-III domains span residues 643–753, 758–855, 860–967, 971–1065, 1069–1164, 1169–1270, 1275–1372, 1376–1469, 1474–1570, 1575–1677, 1682–1785, 1789–1883, and 1885–1984; these read PPSN…LPQE, PPVG…TKEG, PPTN…TMDD, EVTG…VEPV, APTA…TIQA, PPFN…TREA, GPLD…TFED, VPSN…TNNR, APSV…TLPA, GVGG…VGEA, EPRA…TLPG, APLH…GPQD, and SPVA…TPSK. 2 N-linked (GlcNAc...) asparagine glycosylation sites follow: asparagine 1843 and asparagine 1876. The chain crosses the membrane as a helical span at residues 2002–2022; it reads WFMVSLAATSIVIIVMVIAVL. The Cytoplasmic segment spans residues 2023-2224; sequence CVKSKSYKYK…APLPGFSSFV (202 aa). 2 disordered regions span residues 2068 to 2157 and 2171 to 2195; these read TLNS…RSDP and LRQSWKKTKPVRNYSSYTDSEPEGS. At serine 2071 the chain carries Phosphoserine. Residues 2073-2085 are compositionally biased toward low complexity; that stretch reads GTLRSGTLGTLGR. Threonine 2074 is subject to Phosphothreonine. 2 stretches are compositionally biased toward basic and acidic residues: residues 2112–2122 and 2144–2157; these read HSDEESLKCYD and QHSESENESVRSDP. Serine 2113 and serine 2117 each carry phosphoserine.

It belongs to the sidekick family.

It localises to the membrane. Participates in homotypic or heterotypic interactions in the eye during pattern formation to prevent extra cells from joining the precluster and differentiating as photoreceptor cells. The protein is Protein sidekick of Drosophila melanogaster (Fruit fly).